The sequence spans 611 residues: Protein decapping 5 (611 aa).

A Sm domain is found at 9-92 (KSSSAADSYV…IKDLQVKASP (84 aa)). Disordered stretches follow at residues 111–153 (HYPS…AMPL), 183–238 (GLPQ…PSSL), 264–301 (SSSL…PTLP), 318–362 (EAST…DKPK), 396–455 (QVSS…AGRS), and 519–611 (FFDS…NRTT). Polar residues-rich tracts occupy residues 117 to 140 (PTSG…NGQP) and 203 to 214 (NSLQQPLQYPNF). The segment covering 264–281 (SSSLQSTLQSAPSPSLAS) has biased composition (low complexity). Composition is skewed to polar residues over residues 318 to 330 (EAST…NKPS), 396 to 413 (QVSS…TSEA), and 424 to 437 (ARPT…SFPN). The segment covering 441–453 (YRGRGRGRGRGAG) has biased composition (basic residues). The region spanning 453–489 (GRSHQVMKFTEDFDFTAMNEKFNKDEVWGHLGKSTTL) is the DFDF domain. An FFD box motif is present at residues 512–527 (PVYNKDDFFDSLSSNT). Residues 528-547 (IDRESQNSRPRFSEQRKLDT) are compositionally biased toward basic and acidic residues. The TFG box motif lies at 534–554 (NSRPRFSEQRKLDTETFGEFS). Residues 559-604 (GRGGRGGYGRNNGYSRGGYGGRGYGGYGGRGGGGGGYGYGGRGQGR) are compositionally biased toward gly residues.

It belongs to the LSM14 family. Homodimer. Component of the decapping complex. Interacts with DCP1 and DCP2.

Its subcellular location is the cytoplasm. It is found in the P-body. As a component of the decapping complex, involved in the degradation of mRNAs. Promotes P-body formation. Translational repressor. The sequence is that of Protein decapping 5 (DCP5) from Arabidopsis thaliana (Mouse-ear cress).